The sequence spans 175 residues: Large ribosomal subunit protein uL10 (175 aa).

It belongs to the universal ribosomal protein uL10 family. In terms of assembly, part of the ribosomal stalk of the 50S ribosomal subunit. The N-terminus interacts with L11 and the large rRNA to form the base of the stalk. The C-terminus forms an elongated spine to which L12 dimers bind in a sequential fashion forming a multimeric L10(L12)X complex.

Functionally, forms part of the ribosomal stalk, playing a central role in the interaction of the ribosome with GTP-bound translation factors. The sequence is that of Large ribosomal subunit protein uL10 from Cyanothece sp. (strain PCC 7425 / ATCC 29141).